Here is a 248-residue protein sequence, read N- to C-terminus: Phosphomannomutase (248 aa).

Aspartate 12 functions as the Nucleophile in the catalytic mechanism. Mg(2+) contacts are provided by aspartate 12 and aspartate 14. Aspartate 14 serves as the catalytic Proton donor/acceptor. Alpha-D-mannose 1-phosphate-binding residues include arginine 21, arginine 123, arginine 134, arginine 141, serine 179, and aspartate 181. Residues aspartate 207, phenylalanine 219, and threonine 224 each contribute to the Mg(2+) site.

Belongs to the eukaryotic PMM family. Homodimer. Mg(2+) serves as cofactor.

It is found in the cytoplasm. The enzyme catalyses alpha-D-mannose 1-phosphate = D-mannose 6-phosphate. The protein operates within nucleotide-sugar biosynthesis; GDP-alpha-D-mannose biosynthesis; alpha-D-mannose 1-phosphate from D-fructose 6-phosphate: step 2/2. Functionally, catalyzes the interconversion of mannose-6-phosphate to mannose-1-phosphate, the precursor for the synthesis of GDP-mannose. GDP-mannose is an essential sugar nucleotide for the synthesis of D-mannose-containing cell wall polysaccharides (galactomannans and glucomannans), glycolipids, glycoproteins and the antioxidant L-ascorbate. The protein is Phosphomannomutase of Spinacia oleracea (Spinach).